Here is a 398-residue protein sequence, read N- to C-terminus: Ribosomal RNA large subunit methyltransferase F (398 aa).

Positions 1-12 (MTPSRKPARPGA) are enriched in basic residues. The disordered stretch occupies residues 1–85 (MTPSRKPARP…RNLHGQGYDF (85 aa)). Low complexity-rich tracts occupy residues 20–40 (PSAK…AQPK) and 48–59 (QAKSQAKPQAKS).

This sequence belongs to the methyltransferase superfamily. METTL16/RlmF family.

It localises to the cytoplasm. The catalysed reaction is adenosine(1618) in 23S rRNA + S-adenosyl-L-methionine = N(6)-methyladenosine(1618) in 23S rRNA + S-adenosyl-L-homocysteine + H(+). Its function is as follows. Specifically methylates the adenine in position 1618 of 23S rRNA. This is Ribosomal RNA large subunit methyltransferase F from Shewanella loihica (strain ATCC BAA-1088 / PV-4).